The primary structure comprises 268 residues: Putative S-adenosyl-L-methionine-dependent methyltransferase MAP_0663 (268 aa).

Residues Asp-124 and 153-154 each bind S-adenosyl-L-methionine; that span reads DL.

Belongs to the UPF0677 family.

Its function is as follows. Exhibits S-adenosyl-L-methionine-dependent methyltransferase activity. This is Putative S-adenosyl-L-methionine-dependent methyltransferase MAP_0663 from Mycolicibacterium paratuberculosis (strain ATCC BAA-968 / K-10) (Mycobacterium paratuberculosis).